The chain runs to 576 residues: Carboxypeptidase S (576 aa).

At methionine 1 to arginine 19 the chain is on the cytoplasmic side. Residue lysine 8 forms a Glycyl lysine isopeptide (Lys-Gly) (interchain with G-Cter in ubiquitin) linkage. A helical transmembrane segment spans residues alanine 20–leucine 40. Topologically, residues histidine 41–alanine 576 are lumenal. The interval proline 44–lysine 65 is disordered. Asparagine 88 carries N-linked (GlcNAc...) asparagine glycosylation. Zn(2+) is bound at residue histidine 168. Aspartate 170 is a catalytic residue. Asparagine 176 carries N-linked (GlcNAc...) asparagine glycosylation. Aspartate 205 is a binding site for Zn(2+). Asparagine 228 carries an N-linked (GlcNAc...) asparagine glycan. Glutamate 239 acts as the Proton acceptor in catalysis. Zn(2+) contacts are provided by glutamate 240 and aspartate 268. Residues asparagine 381 and asparagine 525 are each glycosylated (N-linked (GlcNAc...) asparagine). Histidine 547 serves as a coordination point for Zn(2+).

Belongs to the peptidase M20A family. In terms of assembly, yscS is synthesized as one polypeptide chain precursor which after carbohydrate modification in the secretory pathway yields two active precursor molecules. The proteolytically unprocessed forms are associated with the membrane, whereas the mature forms of the enzyme are soluble. Zn(2+) is required as a cofactor. Post-translationally, glycosylated. In terms of processing, ubiquitinated. Ubiquitination mediates sorting into internal vesicles in late endosomes. TUL1 is required for ubiquitination.

It localises to the vacuole membrane. It catalyses the reaction Release of a C-terminal amino acid from a peptide in which glycine is the penultimate amino acid, e.g. Z-Gly-|-Leu.. Its function is as follows. Necessary for use of certain peptides as sole nitrogen source. May also cleave intracellularly generated peptides to recycle amino acids for protein synthesis. This Saccharomyces cerevisiae (strain ATCC 204508 / S288c) (Baker's yeast) protein is Carboxypeptidase S (CPS1).